The sequence spans 194 residues: MRQAKIERNTFETKIKLSLNLDTQEPVDIQTGVGFFDHMLTLFARHGRMSLVVKADGDLHVDSHHTVEDVGIALGQALRQALGDKVGINRYGTSFVPMDETLGMASLDLSGRSYLVFDAEFDNPKLGNFDTELVEEFFQALAFNVQMNLHLKILHGKNNHHKAESLFKATGRALREAVTINPEIKGVNSTKGML.

This sequence belongs to the imidazoleglycerol-phosphate dehydratase family.

The protein resides in the cytoplasm. It catalyses the reaction D-erythro-1-(imidazol-4-yl)glycerol 3-phosphate = 3-(imidazol-4-yl)-2-oxopropyl phosphate + H2O. The protein operates within amino-acid biosynthesis; L-histidine biosynthesis; L-histidine from 5-phospho-alpha-D-ribose 1-diphosphate: step 6/9. This chain is Imidazoleglycerol-phosphate dehydratase, found in Streptococcus mutans serotype c (strain ATCC 700610 / UA159).